The sequence spans 150 residues: Large ribosomal subunit protein bL9 (150 aa).

The protein belongs to the bacterial ribosomal protein bL9 family.

Its function is as follows. Binds to the 23S rRNA. The protein is Large ribosomal subunit protein bL9 of Shewanella pealeana (strain ATCC 700345 / ANG-SQ1).